Here is a 157-residue protein sequence, read N- to C-terminus: SsrA-binding protein (157 aa).

A disordered region spans residues 133-157 (LHDKRETEKKRDWSREKGRLLRARG). Positions 135-151 (DKRETEKKRDWSREKGR) are enriched in basic and acidic residues.

It belongs to the SmpB family.

It is found in the cytoplasm. In terms of biological role, required for rescue of stalled ribosomes mediated by trans-translation. Binds to transfer-messenger RNA (tmRNA), required for stable association of tmRNA with ribosomes. tmRNA and SmpB together mimic tRNA shape, replacing the anticodon stem-loop with SmpB. tmRNA is encoded by the ssrA gene; the 2 termini fold to resemble tRNA(Ala) and it encodes a 'tag peptide', a short internal open reading frame. During trans-translation Ala-aminoacylated tmRNA acts like a tRNA, entering the A-site of stalled ribosomes, displacing the stalled mRNA. The ribosome then switches to translate the ORF on the tmRNA; the nascent peptide is terminated with the 'tag peptide' encoded by the tmRNA and targeted for degradation. The ribosome is freed to recommence translation, which seems to be the essential function of trans-translation. This is SsrA-binding protein from Bradyrhizobium diazoefficiens (strain JCM 10833 / BCRC 13528 / IAM 13628 / NBRC 14792 / USDA 110).